The chain runs to 522 residues: Serine/threonine protein phosphatase 2A 59 kDa regulatory subunit B' gamma isoform (522 aa).

The interval Met1–Gln74 is disordered. The span at Pro35 to Asn58 shows a compositional bias: low complexity. Positions Ala63 to Gln74 are enriched in polar residues.

This sequence belongs to the phosphatase 2A regulatory subunit B56 family. PP2A consists of a common heteromeric enzyme, composed of a catalytic subunit (subunits C), a constant regulatory subunit (subunit A), and a variety of regulatory subunits such as subunits B (the R2/B/PR55/B55, R3/B''/PR72/PR130/PR59 and R5/B'/B56 families). Interacts with BRI1. Interacts with IGMT1 and IGMT4. Interacts with ACO3 in the cytosol. As to expression, expressed ubiquitously at low levels. Expressed in roots, emerging lateral roots, cotyledons, leaves, floral stalks and flowers.

It is found in the cytoplasm. It localises to the cytosol. The protein resides in the nucleus. Functionally, the B regulatory subunit may modulate substrate selectivity and catalytic activity, and may also direct the localization of the catalytic enzyme to a particular subcellular compartment. Required for the formation of the PP2A holoenzyme that negatively regulates brassinosteroid signaling by dephosphorylating and inactivating BRI1 in the cytoplasm. Seems to be functionally connected with CPR5 and may mediate the negative regulation of defense reactions and senescence under low irradiances. May contribute to the epigenetic regulation of defense gene expression. Involved in the control of methoxylation of indole glucosinolates and formation of 4-methoxy- indol-3-yl-methyl glucosinolate in leaves, through direct interaction with indole glucosinolate methyltransferases. Involved in growth regulation and stress signaling. Involved in the regulation of reactive oxygen species (ROS) signaling and maintenance of cellular ROS homeostasis. Required to control the level of ACO3 phosphorylation in the cytoplasm. Regulates hydrogen peroxide metabolism by controlling the abundance of AOX1A and AXO3/AOX1D in leaf mitochondria. May mediate dephosphorylation of CRT1 and promote the degradation of unfolded proteins in endoplasmic reticulum (ER). Involved in the regulation of flowering time by repressing FLC, the main flowering repressor gene. The sequence is that of Serine/threonine protein phosphatase 2A 59 kDa regulatory subunit B' gamma isoform (B'GAMMA) from Arabidopsis thaliana (Mouse-ear cress).